An 843-amino-acid polypeptide reads, in one-letter code: Pentatricopeptide repeat-containing protein At4g21880, mitochondrial (843 aa).

PPR repeat units lie at residues Ser-392 to Ile-426, Ser-427 to Pro-461, Asn-462 to Pro-496, Asn-497 to Pro-531, Asp-532 to Glu-562, Asn-564 to Pro-594, and His-598 to Val-632.

This sequence belongs to the PPR family. P subfamily.

The protein resides in the mitochondrion. This chain is Pentatricopeptide repeat-containing protein At4g21880, mitochondrial, found in Arabidopsis thaliana (Mouse-ear cress).